The chain runs to 152 residues: Large ribosomal subunit protein uL15 (152 aa).

Positions Gly31–Met58 are disordered.

It belongs to the universal ribosomal protein uL15 family. Part of the 50S ribosomal subunit.

Functionally, binds to the 23S rRNA. This is Large ribosomal subunit protein uL15 from Parasynechococcus marenigrum (strain WH8102).